Consider the following 317-residue polypeptide: MSHGPKQPGAASAPASGKAPGQHGSFVVAVKQERGEGPRAGEKGSHEEEPVKKRGWPKGKKRKKILPNGPKAPVTGYVRFLNERREQIRTRHPDLPFPEITKMLGAEWSKLQPAEKQRYLDEAEREKQQYMKELRAYQQSEAYKMCAEKIQEKKIKKEDSSSGLMNTLLNGHKGGDCDGFSTFDVPIFTEEFLDQNKAREAELRRLRKMNVAFEEQNAVLQRHTQSMSSARERLEQELALEERRTLALQQQLQAVRQALTASFASLPVPGTGETPTLSTLDFYMARLHGAIERDPAQHEKLIVRIKEILAQVASEHL.

A compositionally biased stretch (low complexity) spans Met-1 to Gln-22. The interval Met-1–Lys-71 is disordered. Lys-31 participates in a covalent cross-link: Glycyl lysine isopeptide (Lys-Gly) (interchain with G-Cter in SUMO2). Positions Lys-31–Lys-52 are enriched in basic and acidic residues. Over residues Lys-53–Ile-65 the composition is skewed to basic residues. A DNA-binding region (HMG box) is located at residues Pro-70–Gln-138. Ser-160 is subject to Phosphoserine. Residues Glu-190–Gln-257 adopt a coiled-coil conformation.

In terms of assembly, component of a BHC histone deacetylase complex that contains HDAC1, HDAC2, HMG20B/BRAF35, KDM1A, RCOR1/CoREST and PHF21A/BHC80. The BHC complex may also contain ZMYM2, ZNF217, ZMYM3, GSE1 and GTF2I. Interacts with the BRCA2 tumor suppressor protein.

It localises to the nucleus. The protein localises to the chromosome. Required for correct progression through G2 phase of the cell cycle and entry into mitosis. Required for RCOR1/CoREST mediated repression of neuronal specific gene promoters. The protein is SWI/SNF-related matrix-associated actin-dependent regulator of chromatin subfamily E member 1-related (HMG20B) of Bos taurus (Bovine).